Reading from the N-terminus, the 199-residue chain is Puromycin N-acetyltransferase (199 aa).

An N-acetyltransferase domain is found at 6-198 (PTVRLATRDD…RTWCMTRKPG (193 aa)).

Detoxification of puromycin. This is Puromycin N-acetyltransferase (pac) from Streptomyces alboniger.